A 484-amino-acid chain; its full sequence is UDP-N-acetylmuramoyl-L-alanyl-D-glutamate--L-lysine ligase (484 aa).

A UDP-N-acetyl-alpha-D-muramoyl-L-alanyl-D-glutamate-binding site is contributed by S43. G119–T125 contacts ATP. UDP-N-acetyl-alpha-D-muramoyl-L-alanyl-D-glutamate contacts are provided by residues T161–T162, S188, and R196. N6-carboxylysine is present on K230. Positions D405–N408 match the L-lysine recognition motif motif.

This sequence belongs to the MurCDEF family. MurE subfamily. Carboxylation is probably crucial for Mg(2+) binding and, consequently, for the gamma-phosphate positioning of ATP.

Its subcellular location is the cytoplasm. It catalyses the reaction UDP-N-acetyl-alpha-D-muramoyl-L-alanyl-D-glutamate + L-lysine + ATP = UDP-N-acetyl-alpha-D-muramoyl-L-alanyl-gamma-D-glutamyl-L-lysine + ADP + phosphate + H(+). It functions in the pathway cell wall biogenesis; peptidoglycan biosynthesis. In terms of biological role, catalyzes the addition of L-lysine to the nucleotide precursor UDP-N-acetylmuramoyl-L-alanyl-D-glutamate (UMAG) in the biosynthesis of bacterial cell-wall peptidoglycan. The chain is UDP-N-acetylmuramoyl-L-alanyl-D-glutamate--L-lysine ligase from Streptococcus agalactiae serotype III (strain NEM316).